The chain runs to 291 residues: 4-diphosphocytidyl-2-C-methyl-D-erythritol kinase (291 aa).

The active site involves Lys-11. 97–107 (PVAAGIGGGSS) is a binding site for ATP. Asp-139 is a catalytic residue.

It belongs to the GHMP kinase family. IspE subfamily.

The enzyme catalyses 4-CDP-2-C-methyl-D-erythritol + ATP = 4-CDP-2-C-methyl-D-erythritol 2-phosphate + ADP + H(+). Its pathway is isoprenoid biosynthesis; isopentenyl diphosphate biosynthesis via DXP pathway; isopentenyl diphosphate from 1-deoxy-D-xylulose 5-phosphate: step 3/6. Functionally, catalyzes the phosphorylation of the position 2 hydroxy group of 4-diphosphocytidyl-2C-methyl-D-erythritol. The sequence is that of 4-diphosphocytidyl-2-C-methyl-D-erythritol kinase from Methylorubrum extorquens (strain PA1) (Methylobacterium extorquens).